A 163-amino-acid polypeptide reads, in one-letter code: Phosphopantetheine adenylyltransferase (163 aa).

T10 contacts substrate. Residues 10–11 (TF) and H18 each bind ATP. K42, L74, and R88 together coordinate substrate. ATP-binding positions include 89-91 (GLR), E99, and 124-130 (NSFISST).

The protein belongs to the bacterial CoaD family. Homohexamer. The cofactor is Mg(2+).

Its subcellular location is the cytoplasm. It catalyses the reaction (R)-4'-phosphopantetheine + ATP + H(+) = 3'-dephospho-CoA + diphosphate. The protein operates within cofactor biosynthesis; coenzyme A biosynthesis; CoA from (R)-pantothenate: step 4/5. Its function is as follows. Reversibly transfers an adenylyl group from ATP to 4'-phosphopantetheine, yielding dephospho-CoA (dPCoA) and pyrophosphate. This Shewanella sp. (strain MR-4) protein is Phosphopantetheine adenylyltransferase.